The sequence spans 416 residues: Serine hydroxymethyltransferase (416 aa).

(6S)-5,6,7,8-tetrahydrofolate is bound by residues leucine 121 and 125-127 (GHL). Lysine 230 carries the post-translational modification N6-(pyridoxal phosphate)lysine.

Belongs to the SHMT family. Homodimer. The cofactor is pyridoxal 5'-phosphate.

The protein localises to the cytoplasm. The enzyme catalyses (6R)-5,10-methylene-5,6,7,8-tetrahydrofolate + glycine + H2O = (6S)-5,6,7,8-tetrahydrofolate + L-serine. Its pathway is one-carbon metabolism; tetrahydrofolate interconversion. The protein operates within amino-acid biosynthesis; glycine biosynthesis; glycine from L-serine: step 1/1. Catalyzes the reversible interconversion of serine and glycine with tetrahydrofolate (THF) serving as the one-carbon carrier. This reaction serves as the major source of one-carbon groups required for the biosynthesis of purines, thymidylate, methionine, and other important biomolecules. Also exhibits THF-independent aldolase activity toward beta-hydroxyamino acids, producing glycine and aldehydes, via a retro-aldol mechanism. In Nitrosomonas europaea (strain ATCC 19718 / CIP 103999 / KCTC 2705 / NBRC 14298), this protein is Serine hydroxymethyltransferase.